Consider the following 328-residue polypeptide: Malate dehydrogenase (328 aa).

NAD(+) is bound at residue 11 to 17 (GAAGQIG). The substrate site is built by arginine 94 and arginine 100. Residues asparagine 107, glutamine 114, and 131-133 (VGN) contribute to the NAD(+) site. Substrate-binding residues include asparagine 133 and arginine 164. Residue histidine 189 is the Proton acceptor of the active site.

This sequence belongs to the LDH/MDH superfamily. MDH type 2 family.

It carries out the reaction (S)-malate + NAD(+) = oxaloacetate + NADH + H(+). Functionally, catalyzes the reversible oxidation of malate to oxaloacetate. The protein is Malate dehydrogenase of Xylella fastidiosa (strain 9a5c).